Reading from the N-terminus, the 392-residue chain is Ceramide phosphoethanolamine synthase (392 aa).

Topologically, residues 1–10 (MIGPSSQISK) are lumenal. Residues 11-31 (ILLTLLFLLIIFYVFMDVELY) traverse the membrane as a helical segment. Topologically, residues 32–140 (LRIHNYAIER…MFDNVIGFSR (109 aa)) are cytoplasmic. The span at 59–82 (SESGSGSIGGSSSSSSSSSSSTST) shows a compositional bias: low complexity. The interval 59 to 91 (SESGSGSIGGSSSSSSSSSSSTSTKLPTAGDRQ) is disordered. Residues 141–161 (STFITPNMISFFHVGVACLAG) form a helical membrane-spanning segment. The Lumenal portion of the chain corresponds to 162–212 (KLVASDSLGYRRLGVLLFQIRTFLDDLDGHVARVRKHIRGERSEIGTSGYY). A helical membrane pass occupies residues 213–233 (VDGLCDGLGCIALLLGIFFYL). The Cytoplasmic segment spans residues 234 to 271 (KNNPPRRGYSIIPMSDSKLPEPTMMIPKMKATTRKVAK). The chain crosses the membrane as a helical span at residues 272–288 (NVISFTGQLLLSSTAWN). At 289-319 (RYIAVYQNMLEREDVSGNQSHCQDYVFKSTW) the chain is on the lumenal side. A helical transmembrane segment spans residues 320–340 (FFCVAWMWRIVNVHALLHCVL). At 341 to 356 (LSIFCDKLWDFLRAIR) the chain is on the cytoplasmic side. Residues 357 to 377 (YSGYIILLVAICLTEMHILEA) form a helical membrane-spanning segment. At 378-392 (QNYIFNSTACSNISL) the chain is on the lumenal side.

It belongs to the CDP-alcohol phosphatidyltransferase class-I family. Mn(2+) serves as cofactor.

The protein resides in the membrane. It localises to the golgi apparatus membrane. It is found in the cell membrane. The enzyme catalyses CDP-ethanolamine + an N-acylsphing-4-enine = an N-acylsphing-4-enine 1-phosphoethanolamine + CMP + H(+). It carries out the reaction CDP-ethanolamine + an N-acyl-sphingoid base = an N-acyl-sphingoid 1-phosphoethanolamine + CMP + H(+). Catalyzes the biosynthesis of ceramide phosphoethanolamine (CPE) through the transfer of a phosphatidyl head group from cytidine 5'-diphosphate (CDP)-ethanolamine on to the primary hydroxyl of ceramide. The chain is Ceramide phosphoethanolamine synthase from Drosophila melanogaster (Fruit fly).